Here is a 363-residue protein sequence, read N- to C-terminus: NAD(P)H-quinone oxidoreductase subunit 1, chloroplastic (363 aa).

Transmembrane regions (helical) follow at residues 30–50 (LVPILTLVLAITIGVLVIVWL), 104–124 (IAVISIILSYSVIPFSYHLVL), 127–147 (LGIGVFLWIAVSSIAPIGLLM), 253–273 (FGLFYVASYLNLLVSSLFVTV), 300–320 (VFGTTMGMFITLAKTYLFLFI), and 343–363 (FLLPISLGNLLLTTSFQLLSL).

It belongs to the complex I subunit 1 family. In terms of assembly, NDH is composed of at least 16 different subunits, 5 of which are encoded in the nucleus.

It localises to the plastid. It is found in the chloroplast thylakoid membrane. The enzyme catalyses a plastoquinone + NADH + (n+1) H(+)(in) = a plastoquinol + NAD(+) + n H(+)(out). It carries out the reaction a plastoquinone + NADPH + (n+1) H(+)(in) = a plastoquinol + NADP(+) + n H(+)(out). NDH shuttles electrons from NAD(P)H:plastoquinone, via FMN and iron-sulfur (Fe-S) centers, to quinones in the photosynthetic chain and possibly in a chloroplast respiratory chain. The immediate electron acceptor for the enzyme in this species is believed to be plastoquinone. Couples the redox reaction to proton translocation, and thus conserves the redox energy in a proton gradient. The sequence is that of NAD(P)H-quinone oxidoreductase subunit 1, chloroplastic from Piper cenocladum (Ant piper).